Here is a 314-residue protein sequence, read N- to C-terminus: 4-diphosphocytidyl-2-C-methyl-D-erythritol kinase (314 aa).

Lys-11 is an active-site residue. 95-105 is a binding site for ATP; it reads PIGAGLAGGST. Asp-137 is an active-site residue.

It belongs to the GHMP kinase family. IspE subfamily.

It catalyses the reaction 4-CDP-2-C-methyl-D-erythritol + ATP = 4-CDP-2-C-methyl-D-erythritol 2-phosphate + ADP + H(+). It participates in isoprenoid biosynthesis; isopentenyl diphosphate biosynthesis via DXP pathway; isopentenyl diphosphate from 1-deoxy-D-xylulose 5-phosphate: step 3/6. Functionally, catalyzes the phosphorylation of the position 2 hydroxy group of 4-diphosphocytidyl-2C-methyl-D-erythritol. This is 4-diphosphocytidyl-2-C-methyl-D-erythritol kinase from Synechococcus elongatus (strain ATCC 33912 / PCC 7942 / FACHB-805) (Anacystis nidulans R2).